Here is a 482-residue protein sequence, read N- to C-terminus: Nicotine dehydrogenase (482 aa).

Residues 1-38 (MSDKTKTNEGFSRRSFIGSAAVVTAGVAGLGAIDAASA) constitute a signal peptide (tat-type signal). Residues Ala-64, Glu-83, Ala-84, Arg-85, Arg-91, Trp-108, and Val-279 each contribute to the FAD site. A (S)-nicotine-binding site is contributed by Thr-381. Residues Ala-453, Asn-462, and Ile-463 each contribute to the FAD site.

Belongs to the flavin monoamine oxidase family. Monomer in solution. Homodimer in solution. Forms homodimers in the crystal. FAD is required as a cofactor. Predicted to be exported by the Tat system. The position of the signal peptide cleavage has not been experimentally proven.

Its subcellular location is the periplasm. It carries out the reaction (S)-nicotine + 2 Fe(III)-[cytochrome c] = N-methylmyosmine + 2 Fe(II)-[cytochrome c] + 2 H(+). It functions in the pathway alkaloid degradation; nicotine degradation. With respect to regulation, the catalytic rate is not significantly affected by pH. Functionally, involved in nicotine degradation. Catalyzes the conversion of nicotine to N-methylmyosmine. N-methylmyosmine undergoes spontaneous hydrolysis to form pseudooxynicotine (PN). S-nicotine is the optimal substrate. Has lower activity with some nicotine analogs, but shows no activity towards neurotransmitters, including serotonin, dopamine, and norepinephrine, nicotine metabolites and common neuroactive drugs. The enzyme is stereospecific with poor activity with (R)-nicotine as the substrate. The c-type cytochrome protein CycN is the physiological electron acceptor. O(2) is a poor electron acceptor. The protein is Nicotine dehydrogenase of Pseudomonas putida (strain DSM 28022 / S16).